Consider the following 702-residue polypeptide: Ribosomal RNA large subunit methyltransferase K/L (702 aa).

The region spanning 43–154 (LVYQSLMWSR…KETASIALDL (112 aa)) is the THUMP domain.

It belongs to the methyltransferase superfamily. RlmKL family.

It is found in the cytoplasm. It catalyses the reaction guanosine(2445) in 23S rRNA + S-adenosyl-L-methionine = N(2)-methylguanosine(2445) in 23S rRNA + S-adenosyl-L-homocysteine + H(+). The enzyme catalyses guanosine(2069) in 23S rRNA + S-adenosyl-L-methionine = N(2)-methylguanosine(2069) in 23S rRNA + S-adenosyl-L-homocysteine + H(+). Specifically methylates the guanine in position 2445 (m2G2445) and the guanine in position 2069 (m7G2069) of 23S rRNA. The polypeptide is Ribosomal RNA large subunit methyltransferase K/L (Escherichia coli O6:H1 (strain CFT073 / ATCC 700928 / UPEC)).